The primary structure comprises 239 residues: Small ribosomal subunit protein uS3 (239 aa).

Positions 39-107 (IRAALMKTLK…EVLINIVEVR (69 aa)) constitute a KH type-2 domain. Positions 214–239 (AQDKKMAEQDHGGGGGDRRRRDRDAA) are disordered.

This sequence belongs to the universal ribosomal protein uS3 family. Part of the 30S ribosomal subunit. Forms a tight complex with proteins S10 and S14.

Functionally, binds the lower part of the 30S subunit head. Binds mRNA in the 70S ribosome, positioning it for translation. The polypeptide is Small ribosomal subunit protein uS3 (Methylocella silvestris (strain DSM 15510 / CIP 108128 / LMG 27833 / NCIMB 13906 / BL2)).